Consider the following 441-residue polypeptide: Amino-acid acetyltransferase (441 aa).

The N-acetyltransferase domain maps to E295 to S434.

Belongs to the acetyltransferase family. ArgA subfamily. In terms of assembly, homohexamer.

The protein resides in the cytoplasm. The enzyme catalyses L-glutamate + acetyl-CoA = N-acetyl-L-glutamate + CoA + H(+). It functions in the pathway amino-acid biosynthesis; L-arginine biosynthesis; N(2)-acetyl-L-ornithine from L-glutamate: step 1/4. The chain is Amino-acid acetyltransferase from Yersinia enterocolitica serotype O:8 / biotype 1B (strain NCTC 13174 / 8081).